Consider the following 577-residue polypeptide: Probable ATP-dependent RNA helicase DDX55 homolog (577 aa).

The Q motif signature appears at 7–37 (AVATKTYREKLGPEILEVFDKSYKSFTDVQV). The region spanning 40 to 218 (GTHLLNLSDV…VFGLRNAKQV (179 aa)) is the Helicase ATP-binding domain. 53 to 60 (SPTGSGKT) is an ATP binding site. The DEAD box motif lies at 166-169 (DEAD). Residues 231-393 (TLKNYFVECP…EVKVPTSTSR (163 aa)) form the Helicase C-terminal domain. Positions 508–577 (AKEKKRREKE…LSKKEIKDVL (70 aa)) are disordered. The span at 510–530 (EKKRREKEARKMKRAGGRFKS) shows a compositional bias: basic residues.

Belongs to the DEAD box helicase family. DDX55/SPB4 subfamily.

It carries out the reaction ATP + H2O = ADP + phosphate + H(+). Probable ATP-binding RNA helicase. This chain is Probable ATP-dependent RNA helicase DDX55 homolog, found in Caenorhabditis briggsae.